The chain runs to 123 residues: Large ribosomal subunit protein uL22 (123 aa).

The protein belongs to the universal ribosomal protein uL22 family. As to quaternary structure, part of the 50S ribosomal subunit.

Its function is as follows. This protein binds specifically to 23S rRNA; its binding is stimulated by other ribosomal proteins, e.g. L4, L17, and L20. It is important during the early stages of 50S assembly. It makes multiple contacts with different domains of the 23S rRNA in the assembled 50S subunit and ribosome. In terms of biological role, the globular domain of the protein is located near the polypeptide exit tunnel on the outside of the subunit, while an extended beta-hairpin is found that lines the wall of the exit tunnel in the center of the 70S ribosome. This Synechococcus sp. (strain JA-3-3Ab) (Cyanobacteria bacterium Yellowstone A-Prime) protein is Large ribosomal subunit protein uL22.